We begin with the raw amino-acid sequence, 569 residues long: 63 kDa chaperonin, mitochondrial (569 aa).

The N-terminal 29 residues, 1–29, are a transit peptide targeting the mitochondrion; that stretch reads MFKMYRSPHITRNSFKYLKATNINSCRFY.

This sequence belongs to the chaperonin (HSP60) family. Forms a single seven-member ring complex, in tight association with the p60 protein. As to expression, testis.

It is found in the mitochondrion. Its function is as follows. Implicated in mitochondrial protein import and macromolecular assembly. May facilitate the correct folding of imported proteins. May also prevent misfolding and promote the refolding and proper assembly of unfolded polypeptides generated under stress conditions in the mitochondrial matrix. The chain is 63 kDa chaperonin, mitochondrial from Heliothis virescens (Tobacco budworm moth).